Reading from the N-terminus, the 97-residue chain is Small ribosomal subunit protein bS6 (97 aa).

It belongs to the bacterial ribosomal protein bS6 family.

Binds together with bS18 to 16S ribosomal RNA. This Listeria innocua serovar 6a (strain ATCC BAA-680 / CLIP 11262) protein is Small ribosomal subunit protein bS6.